The following is an 82-amino-acid chain: Conotoxin Tx6.6 (82 aa).

An N-terminal signal peptide occupies residues 1–19; it reads MKLTCVMIVAVLFLTAWTL. The propeptide occupies 20–51; that stretch reads VMADDSNNGLANLFSKLRDEMEDPEGSKLEKK. Intrachain disulfides connect C53–C71, C60–C76, and C70–C81. A82 is modified (alanine amide; partial).

The protein belongs to the O1 superfamily. As to expression, expressed by the venom duct.

It localises to the secreted. In terms of biological role, omega-conotoxins act at presynaptic membranes, they bind and block voltage-gated calcium channels (Cav). The chain is Conotoxin Tx6.6 from Conus textile (Cloth-of-gold cone).